Reading from the N-terminus, the 478-residue chain is Sugar transporter ERD6-like 15 (478 aa).

A run of 12 helical transmembrane segments spans residues 31–51 (FVLA…IIGY), 67–87 (IADY…GALI), 106–126 (ILFV…LLDL), 129–149 (LLQG…ITEI), 161–181 (FAQL…TIVA), 185–205 (LAIL…FIPE), 267–287 (AFSL…GLNG), 305–325 (FGFI…TVLV), 333–353 (LLLV…ISFF), 366–386 (VLAL…MGSI), 406–426 (MCNL…SYLL), and 432–452 (GTFL…AKLV).

This sequence belongs to the major facilitator superfamily. Sugar transporter (TC 2.A.1.1) family.

Its subcellular location is the membrane. Functionally, sugar transporter. The sequence is that of Sugar transporter ERD6-like 15 from Arabidopsis thaliana (Mouse-ear cress).